The primary structure comprises 558 residues: Glucose-6-phosphate isomerase (558 aa).

Glutamate 363 serves as the catalytic Proton donor. Catalysis depends on residues histidine 394 and lysine 522.

The protein belongs to the GPI family.

It is found in the cytoplasm. The catalysed reaction is alpha-D-glucose 6-phosphate = beta-D-fructose 6-phosphate. Its pathway is carbohydrate biosynthesis; gluconeogenesis. The protein operates within carbohydrate degradation; glycolysis; D-glyceraldehyde 3-phosphate and glycerone phosphate from D-glucose: step 2/4. Its function is as follows. Catalyzes the reversible isomerization of glucose-6-phosphate to fructose-6-phosphate. This is Glucose-6-phosphate isomerase from Blochmanniella floridana.